A 303-amino-acid polypeptide reads, in one-letter code: Pycsar effector protein BcPycTIR (303 aa).

22 to 138 contributes to the a nucleoside 3',5'-cyclic phosphate binding site; sequence KLVGGDKGLA…RRMAKELSKR (117 aa). A TIR-like region spans residues 154 to 273; sequence RVFVISSAEA…DMAGVTTIPY (120 aa).

In terms of assembly, purified protein forms large 2-dimensional sheets when incubated with cUMP and shorter filaments in the presence of cCMP.

Its subcellular location is the cytoplasm. The enzyme catalyses NAD(+) + H2O = ADP-D-ribose + nicotinamide + H(+). Its activity is regulated as follows. Activated by cyclic UMP (cUMP) and to a lesser extent by cCMP. Functionally, pycsar (pyrimidine cyclase system for antiphage resistance) provides immunity against bacteriophage. The pyrimidine cyclase (PycC) synthesizes cyclic nucleotides in response to infection; these serve as specific second messenger signals. The signals activate the adjacent effector, leading to bacterial cell death and abortive phage infection. A clade B Pycsar system. In terms of biological role, the effector protein of a two-gene Pycsar system. Upon activation by cyclic UMP (cUMP) degrades cellular NAD(+). Expression of this and adjacent uridylate cyclase BcPycC (AC A0A0J5ZXG5) probably confers resistance to bacteriophage. The genes are probably only expressed in response to bacteriophage infection. This protein probably only responds to cUMP (produced by its cognate NTP cyclase). The polypeptide is Pycsar effector protein BcPycTIR (Burkholderia cepacia (Pseudomonas cepacia)).